The sequence spans 228 residues: Isoprenyl transferase (228 aa).

The active site involves Asp9. Asp9 contacts Mg(2+). Substrate-binding positions include 10-13, Trp14, Arg22, His26, and 54-56; these read GNGR and STE. Asn57 functions as the Proton acceptor in the catalytic mechanism. Residues Trp58, Arg60, Arg175, and 181 to 183 each bind substrate; that span reads RMS. A Mg(2+)-binding site is contributed by Glu194.

This sequence belongs to the UPP synthase family. As to quaternary structure, homodimer. Mg(2+) serves as cofactor.

Functionally, catalyzes the condensation of isopentenyl diphosphate (IPP) with allylic pyrophosphates generating different type of terpenoids. In Treponema pallidum (strain Nichols), this protein is Isoprenyl transferase.